A 499-amino-acid polypeptide reads, in one-letter code: Protein NODULATION SIGNALING PATHWAY 2 (499 aa).

Residues N64 to A106 are disordered. Residues T88–E104 show a composition bias toward low complexity. Positions A106–T491 constitute a GRAS domain. The leucine repeat I (LRI) stretch occupies residues L113–K182. The tract at residues F201–A265 is VHIID. The VHIID signature appears at V232–D236. The tract at residues E281–A313 is leucine repeat II (LRII). The PFYRE stretch occupies residues L323 to G414. The SAW stretch occupies residues A417–T491.

This sequence belongs to the GRAS family. Interacts with IPN2. Binds to RAD1. Interacts with RAM1. In terms of tissue distribution, highly expressed in roots.

The protein resides in the nucleus membrane. Its subcellular location is the endoplasmic reticulum. Transcriptional regulator essential for Nod-factor-induced gene expression. Acts downstream of calcium spiking and a calcium/calmodulin-dependent protein kinase required for activation of early nodulation gene expression. Transcription factor involved in the induction of NIN and ENOD40 genes, which are required for rhizobial infection and early nodule development. Does not seem to contribute to the early steps of the arbuscular mycorrhizal fungus infection and colonization processes in roots. Transcription factor involved in the positive regulation of the beta-carotene isomerase D27, which participates in a pathway leading to biosynthesis of strigolactones in roots. In Lotus japonicus (Lotus corniculatus var. japonicus), this protein is Protein NODULATION SIGNALING PATHWAY 2.